Consider the following 344-residue polypeptide: L-rhamnose-proton symporter (344 aa).

Transmembrane regions (helical) follow at residues Ala4–Ala24, Trp38–Leu58, Phe68–Ile88, Met101–Ile121, Thr137–Leu157, Leu175–Ala195, Leu214–Ile234, Val259–Gly279, Ile290–Leu310, and Val323–Ala343.

It belongs to the L-rhamnose transporter (TC 2.A.7.6) family.

The protein resides in the cell inner membrane. It catalyses the reaction L-rhamnopyranose(in) + H(+)(in) = L-rhamnopyranose(out) + H(+)(out). Uptake of L-rhamnose across the cytoplasmic membrane with the concomitant transport of protons into the cell (symport system). The polypeptide is L-rhamnose-proton symporter (Escherichia coli O157:H7).